A 501-amino-acid chain; its full sequence is 25-hydroxyvitamin D-1 alpha hydroxylase, mitochondrial (501 aa).

Cys-448 lines the heme pocket.

It belongs to the cytochrome P450 family. Heme serves as cofactor. In terms of tissue distribution, kidney.

Its subcellular location is the mitochondrion membrane. It carries out the reaction calcidiol + 2 reduced [adrenodoxin] + O2 + 2 H(+) = calcitriol + 2 oxidized [adrenodoxin] + H2O. It catalyses the reaction secalciferol + 2 reduced [adrenodoxin] + O2 + 2 H(+) = calcitetrol + 2 oxidized [adrenodoxin] + H2O. It participates in hormone biosynthesis; cholecalciferol biosynthesis. Catalyzes the conversion of 25-hydroxyvitamin D3 (25(OH)D3) to 1-alpha,25-dihydroxyvitamin D3 (1alpha,25(OH)(2)D3), and of 24,25-dihydroxyvitamin D3 (24,25(OH)(2)D3) to 1-alpha,24,25-trihydroxyvitamin D3 (1alpha,24,25(OH)(3)D3). Is also active with 25-hydroxy-24-oxo-vitamin D3. Plays an important role in normal bone growth, calcium metabolism, and tissue differentiation. The polypeptide is 25-hydroxyvitamin D-1 alpha hydroxylase, mitochondrial (Cyp27b1) (Rattus norvegicus (Rat)).